A 122-amino-acid chain; its full sequence is Large ribosomal subunit protein uL14 (122 aa).

It belongs to the universal ribosomal protein uL14 family. Part of the 50S ribosomal subunit. Forms a cluster with proteins L3 and L19. In the 70S ribosome, L14 and L19 interact and together make contacts with the 16S rRNA in bridges B5 and B8.

Its function is as follows. Binds to 23S rRNA. Forms part of two intersubunit bridges in the 70S ribosome. The chain is Large ribosomal subunit protein uL14 from Janthinobacterium sp. (strain Marseille) (Minibacterium massiliensis).